The sequence spans 370 residues: L-lactate oxidase (370 aa).

The FMN hydroxy acid dehydrogenase domain occupies aspartate 8–glycine 367. Tyrosine 34 serves as a coordination point for pyruvate. Residues proline 87–alanine 89, serine 116, and glutamine 136 contribute to the FMN site. Residue tyrosine 138 participates in pyruvate binding. Position 164 (threonine 164) interacts with FMN. Residue arginine 173 coordinates pyruvate. FMN-binding residues include lysine 238 and serine 260. The pyruvate site is built by histidine 262 and arginine 265. Histidine 262 serves as the catalytic Proton acceptor. FMN contacts are provided by residues aspartate 293–arginine 297 and arginine 317.

This sequence belongs to the FMN-dependent alpha-hydroxy acid dehydrogenase family. In terms of assembly, homotetramer. The cofactor is FMN.

The catalysed reaction is (S)-lactate + O2 = pyruvate + H2O2. It carries out the reaction a (2S)-2-hydroxycarboxylate + O2 = a 2-oxocarboxylate + H2O2. The enzyme catalyses glycolate + O2 = glyoxylate + H2O2. It catalyses the reaction 2-hydroxyoctadecanoate + O2 = 2-oxooctadecanoate + H2O2. In terms of biological role, catalyzes the oxidation of (S)-lactate (L-lactate) to pyruvate, with a reduction of O2 to H2O2. Is also able to use glycolate and to a lesser extent 2-hydroxyoctadecanoate as substrate. The protein is L-lactate oxidase of Roseobacter sp. (strain GAI101).